The sequence spans 197 residues: Protein FAM219B (197 aa).

2 disordered regions span residues 1–77 (MATE…HRDH) and 117–142 (DENL…YSSA). 3 positions are modified to phosphoserine: Ser-14, Ser-125, and Ser-127.

It belongs to the FAM219 family.

This Mus musculus (Mouse) protein is Protein FAM219B (Fam219b).